The following is a 193-amino-acid chain: Ribosomal RNA small subunit methyltransferase G (193 aa).

S-adenosyl-L-methionine-binding positions include Gly-64, Leu-69, 113–114, and Arg-126; that span reads IE.

The protein belongs to the methyltransferase superfamily. RNA methyltransferase RsmG family.

The protein resides in the cytoplasm. It catalyses the reaction guanosine(527) in 16S rRNA + S-adenosyl-L-methionine = N(7)-methylguanosine(527) in 16S rRNA + S-adenosyl-L-homocysteine. Its function is as follows. Specifically methylates the N7 position of guanine in position 527 of 16S rRNA. The polypeptide is Ribosomal RNA small subunit methyltransferase G (Rickettsia massiliae (strain Mtu5)).